The primary structure comprises 311 residues: 4-hydroxy-tetrahydrodipicolinate synthase (311 aa).

Threonine 51 is a pyruvate binding site. Catalysis depends on tyrosine 140, which acts as the Proton donor/acceptor. Residue lysine 168 is the Schiff-base intermediate with substrate of the active site. Isoleucine 209 contributes to the pyruvate binding site.

It belongs to the DapA family. In terms of assembly, homotetramer; dimer of dimers.

It localises to the cytoplasm. The enzyme catalyses L-aspartate 4-semialdehyde + pyruvate = (2S,4S)-4-hydroxy-2,3,4,5-tetrahydrodipicolinate + H2O + H(+). The protein operates within amino-acid biosynthesis; L-lysine biosynthesis via DAP pathway; (S)-tetrahydrodipicolinate from L-aspartate: step 3/4. In terms of biological role, catalyzes the condensation of (S)-aspartate-beta-semialdehyde [(S)-ASA] and pyruvate to 4-hydroxy-tetrahydrodipicolinate (HTPA). The chain is 4-hydroxy-tetrahydrodipicolinate synthase from Streptococcus pneumoniae (strain ATCC 700669 / Spain 23F-1).